The primary structure comprises 191 residues: uncharacterized protein (191 aa).

The 61-residue stretch at 3 to 63 folds into the HTH tetR-type domain; it reads IDRKKLILEA…EIFTTLLKEM (61 aa). The H-T-H motif DNA-binding region spans 26–45; sequence TMDLVAKLANVGKGTIYTFF.

This is an uncharacterized protein from Bacillus subtilis (strain 168).